Consider the following 138-residue polypeptide: Acidic phospholipase A2 Ts-A1 (138 aa).

A signal peptide spans 1–16; that stretch reads MRTLWIMAVLQVGVEG. 7 disulfides stabilise this stretch: C42-C131, C44-C60, C59-C111, C65-C138, C66-C104, C73-C97, and C91-C102. Ca(2+)-binding residues include F43, G45, and G47. H63 is a catalytic residue. Position 64 (D64) interacts with Ca(2+). The active site involves D105.

Requires Ca(2+) as cofactor. As to expression, expressed by the venom gland.

The protein localises to the secreted. It carries out the reaction a 1,2-diacyl-sn-glycero-3-phosphocholine + H2O = a 1-acyl-sn-glycero-3-phosphocholine + a fatty acid + H(+). In terms of biological role, snake venom phospholipase A2 (PLA2) that shows a moderate inhibition of ADP-induced human platelet aggregation when tested on platelet rich plasma. Exhibits high hydrolytic activities and prefers the anionic micelles (dPPC with deoxycholate) to the zwitterionic micelles (dPPC with Triton X-100). PLA2 catalyzes the calcium-dependent hydrolysis of the 2-acyl groups in 3-sn-phosphoglycerides. The sequence is that of Acidic phospholipase A2 Ts-A1 from Trimeresurus stejnegeri (Chinese green tree viper).